The sequence spans 101 residues: Small ribosomal subunit protein uS14 (101 aa).

Residues 1 to 10 (MAKKSSIEKN) show a composition bias toward basic and acidic residues. Residues 1-23 (MAKKSSIEKNNRRKKMTKNAAPK) form a disordered region. Residues 11-23 (NRRKKMTKNAAPK) show a composition bias toward basic residues.

This sequence belongs to the universal ribosomal protein uS14 family. Part of the 30S ribosomal subunit. Contacts proteins S3 and S10.

Functionally, binds 16S rRNA, required for the assembly of 30S particles and may also be responsible for determining the conformation of the 16S rRNA at the A site. This is Small ribosomal subunit protein uS14 from Rhodopseudomonas palustris (strain HaA2).